The chain runs to 394 residues: Elongation factor Tu 1 (394 aa).

One can recognise a tr-type G domain in the interval 10 to 204 (KPHVNVGTIG…ALDSYIPEPE (195 aa)). The G1 stretch occupies residues 19–26 (GHVDHGKT). GTP is bound at residue 19–26 (GHVDHGKT). Thr26 serves as a coordination point for Mg(2+). Residues 60 to 64 (GITIS) are G2. The interval 81-84 (DCPG) is G3. GTP contacts are provided by residues 81–85 (DCPGH) and 136–139 (NKCD). The G4 stretch occupies residues 136–139 (NKCD). A G5 region spans residues 174–176 (SAL).

This sequence belongs to the TRAFAC class translation factor GTPase superfamily. Classic translation factor GTPase family. EF-Tu/EF-1A subfamily. In terms of assembly, monomer.

The protein resides in the cytoplasm. The catalysed reaction is GTP + H2O = GDP + phosphate + H(+). GTP hydrolase that promotes the GTP-dependent binding of aminoacyl-tRNA to the A-site of ribosomes during protein biosynthesis. The polypeptide is Elongation factor Tu 1 (Vibrio vulnificus (strain YJ016)).